The sequence spans 860 residues: DDB1- and CUL4-associated factor 6 (860 aa).

WD repeat units follow at residues 49–88, 92–133, 139–179, 189–229, and 251–290; these read VHDG…VLTT, GHRA…ETNR, CHYG…SCTK, NCRR…TRAT, and NKSC…AREL. 2 stretches are compositionally biased toward basic and acidic residues: residues 288–303 and 312–334; these read RELK…EELR and LRGD…RDGE. 4 disordered regions span residues 288–340, 355–392, 407–490, and 502–675; these read RELK…PNVS, EASE…SPDL, QFLQ…TTST, and IASS…GPGD. The residue at position 336 (Ser336) is a Phosphoserine. 2 stretches are compositionally biased toward polar residues: residues 379–388 and 409–421; these read DISTLPTVPS and LQPS…SAQA. Over residues 422–441 the composition is skewed to low complexity; that stretch reads HSTSSPTESPHSTPLLSSPD. The segment covering 457–467 has biased composition (basic and acidic residues); it reads HQSDNNNEKLS. The segment covering 480 to 490 has biased composition (polar residues); it reads HYSTEGTTTST. Residues 502 to 511 are compositionally biased toward low complexity; it reads IASSSRGIGS. Residues 535-549 show a composition bias toward basic and acidic residues; it reads SETKAPEESSEDVTK. The segment covering 614 to 626 has biased composition (low complexity); the sequence is TSTESATNENNTN. Polar residues predominate over residues 627–636; it reads PEPQFQTEAT. Ser649 is subject to Phosphoserine. Residue Thr654 is modified to Phosphothreonine. Ser657 carries the phosphoserine modification. The region spanning 676–705 is the IQ domain; that stretch reads RRSAVARIQEFFRRRKERKEMEELDTLNIR. WD repeat units lie at residues 718–756 and 759–798; these read NSRT…HLML and ADNH…RIFN. Phosphoserine occurs at positions 847 and 850.

As to quaternary structure, interacts with the nuclear receptors NR3C1 and AR in the presence of ligand. Interacts with DDB1, CUL4A and CUL4B. Highly expressed in skeletal muscle and testis. Expressed to a lesser degree in heart, prostate, and adrenal gland.

Its subcellular location is the nucleus. The protein operates within protein modification; protein ubiquitination. Its function is as follows. Ligand-dependent coactivator of nuclear receptors. Enhance transcriptional activity of the nuclear receptors NR3C1 and AR. May function as a substrate receptor for CUL4-DDB1 E3 ubiquitin-protein ligase complex. This chain is DDB1- and CUL4-associated factor 6 (DCAF6), found in Homo sapiens (Human).